Consider the following 687-residue polypeptide: Phage-like element PBSX protein XkdV (687 aa).

The protein to B.subtilis YqcC.

This is Phage-like element PBSX protein XkdV (xkdV) from Bacillus subtilis (strain 168).